Reading from the N-terminus, the 590-residue chain is Negative elongation factor D (590 aa).

The interval 15–43 is disordered; the sequence is YGSAAEWGDEADGGQQEDDSGEGEDDAEV. Residues 21-43 show a composition bias toward acidic residues; sequence WGDEADGGQQEDDSGEGEDDAEV.

This sequence belongs to the NELF-D family. The NELF complex is composed of NELFA, NELFB, NELFCD and NELFE; NELFA and NELFCD form a stable subcomplex that binds primarily through NELFCD to the N-terminus of NELFB. Binds RNA which may help to stabilize the NELF complex on nucleic acid. In vitro, the NELFA:NELFCD subcomplex binds to ssDNA and ssRNA in a sequence- and structure-dependent manner. Interacts with ARAF1. Interacts with PCF11. Interacts with NELFB. Interacts with KAT8.

It is found in the nucleus. Functionally, essential component of the NELF complex, a complex that negatively regulates the elongation of transcription by RNA polymerase II. The NELF complex, which acts via an association with the DSIF complex and causes transcriptional pausing, is counteracted by the P-TEFb kinase complex. The chain is Negative elongation factor D (NELFCD) from Pongo abelii (Sumatran orangutan).